Reading from the N-terminus, the 247-residue chain is Dof zinc finger protein DOF3.5 (247 aa).

The segment at 25–79 (PSCPRCGSSNTKFCYYNNYSLTQPRYFCKGCRRYWTKGGSLRNVPVGGGCRKSRR) adopts a Dof-type zinc-finger fold. Residues Cys-27, Cys-30, Cys-52, and Cys-55 each coordinate Zn(2+). Positions 70–100 (VGGGCRKSRRPKSSSGNNTKTSLTANSGNPG) are disordered. A compositionally biased stretch (polar residues) spans 82–94 (SSSGNNTKTSLTA).

Its subcellular location is the nucleus. Functionally, transcription factor that binds specifically to a 5'-AA[AG]G-3' consensus core sequence. This chain is Dof zinc finger protein DOF3.5 (DOF3.5), found in Arabidopsis thaliana (Mouse-ear cress).